A 448-amino-acid polypeptide reads, in one-letter code: uncharacterized protein (448 aa).

The helical transmembrane segment at 19 to 41 (LGLLVPFLLLLFSCTNTVGYGVL) threads the bilayer. Residues 105-181 (YSYATSVLDG…CFSHGLSLFD (77 aa)) enclose the SH3b domain.

It localises to the membrane. This is an uncharacterized protein from Treponema pallidum (strain Nichols).